The primary structure comprises 23 residues: Cysteine-rich venom protein 24 (23 aa).

Residues 1 to 23 (VDFASESXNKRENQQIVDKHNAL) form a disordered region. Positions 8 to 23 (XNKRENQQIVDKHNAL) are enriched in basic and acidic residues.

The protein belongs to the CRISP family. Post-translationally, contains 8 disulfide bonds. In terms of tissue distribution, expressed by the venom gland.

It localises to the secreted. This is Cysteine-rich venom protein 24 from Naja kaouthia (Monocled cobra).